Consider the following 353-residue polypeptide: Fe(3+) ions import ATP-binding protein FbpC (353 aa).

The region spanning 9–239 (VVFENVRKTF…PASSFIADFM (231 aa)) is the ABC transporter domain. 41 to 48 (GPSGCGKT) contributes to the ATP binding site.

The protein belongs to the ABC transporter superfamily. Fe(3+) ion importer (TC 3.A.1.10) family. As to quaternary structure, the complex is composed of two ATP-binding proteins (FbpC), two transmembrane proteins (FbpB) and a solute-binding protein (FbpA).

It is found in the cell inner membrane. It carries out the reaction Fe(3+)(out) + ATP + H2O = Fe(3+)(in) + ADP + phosphate + H(+). In terms of biological role, part of the ABC transporter complex FbpABC involved in Fe(3+) ions import. Responsible for energy coupling to the transport system. The protein is Fe(3+) ions import ATP-binding protein FbpC of Agrobacterium fabrum (strain C58 / ATCC 33970) (Agrobacterium tumefaciens (strain C58)).